Here is a 310-residue protein sequence, read N- to C-terminus: Olfactory receptor 5P53 (310 aa).

Residues 1–25 (MEAENHTTVAELIILGLTEDPKLCI) are Extracellular-facing. A glycan (N-linked (GlcNAc...) asparagine) is linked at Asn5. A helical transmembrane segment spans residues 26–46 (VFFVIFLGVYIVTLVGNISII). The Cytoplasmic segment spans residues 47 to 54 (TLIRISSQ). The chain crosses the membrane as a helical span at residues 55–75 (LHTPMYLFLSHLAFVDILYST). At 76–99 (SVSVIMHMELLGHGLALPVAACAA) the chain is on the extracellular side. An intrachain disulfide couples Cys97 to Cys189. Residues 100–120 (QLCITVSFGSAECFLLAAMAY) form a helical membrane-spanning segment. Topologically, residues 121-133 (DRYVAICSPLLYS) are cytoplasmic. Residues 134-154 (TLMSPRVCFLLLGMSYVGGCM) form a helical membrane-spanning segment. Over 155–196 (NGWTFTGCLLSLSFCGPNQIDHFFCDFSPLLKLSCSDVSIIG) the chain is Extracellular. A helical transmembrane segment spans residues 197–217 (IIPSISSGSIIVVTVFVIAVS). Residues 218–237 (YIYILITILNMRSTEGRHKA) are Cytoplasmic-facing. Residues 238–258 (FSTCTSHLTAVTLYYGTITFI) traverse the membrane as a helical segment. Over 259–271 (YVMPKSNYSTEQN) the chain is Extracellular. The N-linked (GlcNAc...) asparagine glycan is linked to Asn265. Residues 272 to 292 (KVLSVFYTVVIPMLNPLIYSL) form a helical membrane-spanning segment. Residues 293 to 310 (RNRDVKEALRKATVRVYS) are Cytoplasmic-facing.

This sequence belongs to the G-protein coupled receptor 1 family.

It is found in the cell membrane. Its function is as follows. Potential odorant receptor. The chain is Olfactory receptor 5P53 from Mus musculus (Mouse).